Here is a 299-residue protein sequence, read N- to C-terminus: 33 kDa chaperonin (299 aa).

Cystine bridges form between Cys234-Cys236 and Cys268-Cys271.

This sequence belongs to the HSP33 family. Post-translationally, under oxidizing conditions two disulfide bonds are formed involving the reactive cysteines. Under reducing conditions zinc is bound to the reactive cysteines and the protein is inactive.

The protein localises to the cytoplasm. Redox regulated molecular chaperone. Protects both thermally unfolding and oxidatively damaged proteins from irreversible aggregation. Plays an important role in the bacterial defense system toward oxidative stress. The protein is 33 kDa chaperonin of Pseudomonas putida (strain ATCC 47054 / DSM 6125 / CFBP 8728 / NCIMB 11950 / KT2440).